The following is a 402-amino-acid chain: Zinc finger protein 586 (402 aa).

Residues 15-87 (VTFEDVAVNF…DQGGHSGERP (73 aa)) enclose the KRAB domain. Residues 88-116 (YECGEYRKLFKNKSCLTEPRRDHKHRNVR) form a C2H2-type 1; degenerate zinc finger. A C2H2-type 2; degenerate zinc finger spans residues 122 to 144 (YECSKYGKLFHQKPTLHIHERFH). The C2H2-type 3; degenerate zinc finger occupies 150–172 (YECSECGKSFHQSSSLLQRQTLH). 8 consecutive C2H2-type zinc fingers follow at residues 178 to 200 (YECIECGKAFAEKSSLINHRKVH), 206 to 228 (YECNECGKSFAYTSSLIKHRRIH), 234 to 256 (YECSECGRSFAENSSLIKHLRVH), 262 to 284 (YECVECGKSFRRSSSLLQHQRVH), 290 to 312 (YECSECGKSFSLRSNLIHHQRVH), 317 to 339 (HECGQCGKSFSRKSSLIIHLRVH), 345 to 367 (YECSDCGKSFAENSSLIKHLRVH), and 373 to 395 (YECIDCGKSFRHSSSFRRHQRVH).

It belongs to the krueppel C2H2-type zinc-finger protein family.

It is found in the nucleus. Its function is as follows. May be involved in transcriptional regulation. The protein is Zinc finger protein 586 (ZNF586) of Homo sapiens (Human).